A 360-amino-acid polypeptide reads, in one-letter code: Mannose-1-phosphate guanyltransferase beta-B (360 aa).

Belongs to the transferase hexapeptide repeat family.

It catalyses the reaction alpha-D-mannose 1-phosphate + GTP + H(+) = GDP-alpha-D-mannose + diphosphate. Its pathway is nucleotide-sugar biosynthesis; GDP-alpha-D-mannose biosynthesis; GDP-alpha-D-mannose from alpha-D-mannose 1-phosphate (GTP route): step 1/1. Functionally, catalyzes the formation of GDP-mannose, an essential precursor of glycan moieties of glycoproteins and glycolipids. This chain is Mannose-1-phosphate guanyltransferase beta-B (gmppb-b), found in Xenopus laevis (African clawed frog).